A 253-amino-acid chain; its full sequence is Phosphonates import ATP-binding protein PhnC (253 aa).

One can recognise an ABC transporter domain in the interval 4-247; sequence VRFEGVTKRF…QAVAMIYRAG (244 aa). 36–43 contributes to the ATP binding site; that stretch reads GLSGSGKS.

This sequence belongs to the ABC transporter superfamily. Phosphonates importer (TC 3.A.1.9.1) family. In terms of assembly, the complex is composed of two ATP-binding proteins (PhnC), two transmembrane proteins (PhnE) and a solute-binding protein (PhnD).

The protein localises to the cell membrane. It catalyses the reaction phosphonate(out) + ATP + H2O = phosphonate(in) + ADP + phosphate + H(+). Functionally, part of the ABC transporter complex PhnCDE involved in phosphonates import. Responsible for energy coupling to the transport system. The sequence is that of Phosphonates import ATP-binding protein PhnC from Frankia casuarinae (strain DSM 45818 / CECT 9043 / HFP020203 / CcI3).